Reading from the N-terminus, the 85-residue chain is Toxin BmKaTx10 (85 aa).

A signal peptide spans 1–19; that stretch reads MNYLVMVSFALLLMTGVES. An LCN-type CS-alpha/beta domain is found at 21-83; sequence RDGYIALPHN…VPIRVPGRCH (63 aa). 4 cysteine pairs are disulfide-bonded: cysteine 31–cysteine 82, cysteine 35–cysteine 55, cysteine 41–cysteine 65, and cysteine 45–cysteine 67.

This sequence belongs to the long (4 C-C) scorpion toxin superfamily. Sodium channel inhibitor family. Alpha subfamily. Expressed by the venom gland.

The protein resides in the secreted. Alpha toxins bind voltage-independently at site-3 of sodium channels (Nav) and inhibit the inactivation of the activated channels, thereby blocking neuronal transmission. This chain is Toxin BmKaTx10, found in Olivierus martensii (Manchurian scorpion).